The chain runs to 50 residues: METTNFGFVASLLFVGVPTIFLIGLFLSTQEGEKSSFYSDSGKGKLDPKR.

The chain crosses the membrane as a helical span at residues 6–26; the sequence is FGFVASLLFVGVPTIFLIGLF.

This sequence belongs to the PsbM family. In terms of assembly, PSII is composed of 1 copy each of membrane proteins PsbA, PsbB, PsbC, PsbD, PsbE, PsbF, PsbH, PsbI, PsbJ, PsbK, PsbL, PsbM, PsbT, PsbX, PsbY, Psb30/Ycf12, peripheral proteins PsbO, CyanoQ (PsbQ), PsbU, PsbV and a large number of cofactors. It forms dimeric complexes.

The protein resides in the cellular thylakoid membrane. Its function is as follows. One of the components of the core complex of photosystem II (PSII). PSII is a light-driven water:plastoquinone oxidoreductase that uses light energy to abstract electrons from H(2)O, generating O(2) and a proton gradient subsequently used for ATP formation. It consists of a core antenna complex that captures photons, and an electron transfer chain that converts photonic excitation into a charge separation. This subunit is found at the monomer-monomer interface. This Prochlorococcus marinus (strain MIT 9215) protein is Photosystem II reaction center protein M.